The chain runs to 128 residues: Cytochrome c-type biogenesis protein CcmE (128 aa).

At 1-8 (MQKRVRNR) the chain is on the cytoplasmic side. The chain crosses the membrane as a helical; Signal-anchor for type II membrane protein span at residues 9-29 (LITIIICFCSAALGISIVLYN). The Periplasmic segment spans residues 30–128 (LEKNIVFFLP…KHDENYRPPS (99 aa)). His120 and Tyr124 together coordinate heme.

The protein belongs to the CcmE/CycJ family.

It is found in the cell inner membrane. Functionally, heme chaperone required for the biogenesis of c-type cytochromes. Transiently binds heme delivered by CcmC and transfers the heme to apo-cytochromes in a process facilitated by CcmF and CcmH. The sequence is that of Cytochrome c-type biogenesis protein CcmE from Rickettsia felis (strain ATCC VR-1525 / URRWXCal2) (Rickettsia azadi).